The primary structure comprises 518 residues: Sensor protein kinase HptS (518 aa).

Transmembrane regions (helical) follow at residues 20–40 and 222–242; these read IFPV…IYIW and GITL…FGFI. Positions 297–513 constitute a Histidine kinase domain; it reads EQLIHSIEHT…LICYKIPLSR (217 aa). His325 is modified (phosphohistidine; by autocatalysis).

Autophosphorylated.

It is found in the cell membrane. It catalyses the reaction ATP + protein L-histidine = ADP + protein N-phospho-L-histidine.. Member of the two-component regulatory system HptS/HptR that regulates genes involved in hexose phosphate transport system in response to changes in extracellular phosphate sources. May act as a sensor protein kinase which is autophosphorylated at a histidine residue and transfers its phosphate group to the conserved aspartic acid residue in the regulatory domain of HptS. In turn, HptS antagonizes CcpA-dependent transcription of a subset of CcpA-regulated genes involved in antibiotic susceptibility. The polypeptide is Sensor protein kinase HptS (hptS) (Staphylococcus aureus (strain USA300)).